Consider the following 131-residue polypeptide: Large ribosomal subunit protein uL24 (131 aa).

This sequence belongs to the universal ribosomal protein uL24 family. Part of the 50S ribosomal subunit.

Its function is as follows. One of two assembly initiator proteins, it binds directly to the 5'-end of the 23S rRNA, where it nucleates assembly of the 50S subunit. Functionally, located at the polypeptide exit tunnel on the outside of the subunit. This Korarchaeum cryptofilum (strain OPF8) protein is Large ribosomal subunit protein uL24.